The following is a 122-amino-acid chain: Large ribosomal subunit protein uL14 (122 aa).

Belongs to the universal ribosomal protein uL14 family. Part of the 50S ribosomal subunit. Forms a cluster with proteins L3 and L19. In the 70S ribosome, L14 and L19 interact and together make contacts with the 16S rRNA in bridges B5 and B8.

Its function is as follows. Binds to 23S rRNA. Forms part of two intersubunit bridges in the 70S ribosome. The sequence is that of Large ribosomal subunit protein uL14 from Corynebacterium kroppenstedtii (strain DSM 44385 / JCM 11950 / CIP 105744 / CCUG 35717).